Reading from the N-terminus, the 154-residue chain is Endoribonuclease YbeY (154 aa).

Positions 116, 120, and 126 each coordinate Zn(2+).

This sequence belongs to the endoribonuclease YbeY family. It depends on Zn(2+) as a cofactor.

Its subcellular location is the cytoplasm. In terms of biological role, single strand-specific metallo-endoribonuclease involved in late-stage 70S ribosome quality control and in maturation of the 3' terminus of the 16S rRNA. This chain is Endoribonuclease YbeY, found in Chromohalobacter salexigens (strain ATCC BAA-138 / DSM 3043 / CIP 106854 / NCIMB 13768 / 1H11).